The following is a 75-amino-acid chain: Small ribosomal subunit protein bS18 (75 aa).

The protein belongs to the bacterial ribosomal protein bS18 family. As to quaternary structure, part of the 30S ribosomal subunit. Forms a tight heterodimer with protein bS6.

Binds as a heterodimer with protein bS6 to the central domain of the 16S rRNA, where it helps stabilize the platform of the 30S subunit. In Buchnera aphidicola subsp. Cinara cedri (strain Cc), this protein is Small ribosomal subunit protein bS18.